The chain runs to 189 residues: GTPase HRas (189 aa).

N-acetylmethionine is present on methionine 1. Residue threonine 2 is modified to N-acetylthreonine; in GTPase HRas, N-terminally processed. Position 10–17 (10–17 (GAGGVGKS)) interacts with GTP. An Effector region motif is present at residues 32–40 (YDPTIEDSY). Residues 57 to 61 (DTAGQ) and 116 to 119 (NKCD) each bind GTP. The residue at position 118 (cysteine 118) is an S-nitrosocysteine. The segment at 166 to 185 (HKLRKLNPPDESGPGCMNCK) is hypervariable region. 2 S-palmitoyl cysteine lipidation sites follow: cysteine 181 and cysteine 184. A Cysteine methyl ester modification is found at cysteine 186. The S-farnesyl cysteine moiety is linked to residue cysteine 186. A propeptide spans 187 to 189 (VIS) (removed in mature form).

This sequence belongs to the small GTPase superfamily. Ras family. Palmitoylated by the ZDHHC9-GOLGA7 complex. A continuous cycle of de- and re-palmitoylation regulates rapid exchange between plasma membrane and Golgi.

It is found in the cell membrane. Its subcellular location is the golgi apparatus membrane. It carries out the reaction GTP + H2O = GDP + phosphate + H(+). Alternates between an inactive form bound to GDP and an active form bound to GTP. Activated by a guanine nucleotide-exchange factor (GEF) and inactivated by a GTPase-activating protein (GAP). Ras proteins bind GDP/GTP and possess intrinsic GTPase activity. This chain is GTPase HRas (HRAS), found in Gallus gallus (Chicken).